We begin with the raw amino-acid sequence, 238 residues long: Purine nucleoside phosphorylase DeoD-type (238 aa).

Residue H4 participates in a purine D-ribonucleoside binding. Phosphate-binding positions include G20, R24, R43, and 87-90; that span reads RVGS. Residues 179–181 and 203–204 each bind a purine D-ribonucleoside; these read EME and SD. The active-site Proton donor is the D204.

The protein belongs to the PNP/UDP phosphorylase family. As to quaternary structure, homohexamer; trimer of homodimers.

It carries out the reaction a purine D-ribonucleoside + phosphate = a purine nucleobase + alpha-D-ribose 1-phosphate. The catalysed reaction is a purine 2'-deoxy-D-ribonucleoside + phosphate = a purine nucleobase + 2-deoxy-alpha-D-ribose 1-phosphate. In terms of biological role, catalyzes the reversible phosphorolytic breakdown of the N-glycosidic bond in the beta-(deoxy)ribonucleoside molecules, with the formation of the corresponding free purine bases and pentose-1-phosphate. This is Purine nucleoside phosphorylase DeoD-type from Haemophilus influenzae (strain PittGG).